Consider the following 66-residue polypeptide: MIIPMRCFTCGRPLAQYWEEFRSRVEGGEDPRKVLDELGVKRYCCRKTLLAHVPAIYEVRKFKRVL.

4 residues coordinate Zn(2+): Cys7, Cys10, Cys44, and Cys45.

It belongs to the archaeal Rpo10/eukaryotic RPB10 RNA polymerase subunit family. Part of the RNA polymerase complex. The cofactor is Zn(2+).

The protein localises to the cytoplasm. It catalyses the reaction RNA(n) + a ribonucleoside 5'-triphosphate = RNA(n+1) + diphosphate. Its function is as follows. DNA-dependent RNA polymerase (RNAP) catalyzes the transcription of DNA into RNA using the four ribonucleoside triphosphates as substrates. The protein is DNA-directed RNA polymerase subunit Rpo10 of Hyperthermus butylicus (strain DSM 5456 / JCM 9403 / PLM1-5).